The chain runs to 140 residues: Large ribosomal subunit protein uL22c (140 aa).

This sequence belongs to the universal ribosomal protein uL22 family. As to quaternary structure, part of the 50S ribosomal subunit.

Its subcellular location is the plastid. The protein localises to the chloroplast. Its function is as follows. This protein binds specifically to 23S rRNA. Functionally, the globular domain of the protein is located near the polypeptide exit tunnel on the outside of the subunit, while an extended beta-hairpin is found that lines the wall of the exit tunnel in the center of the 70S ribosome. This Calycanthus floridus var. glaucus (Eastern sweetshrub) protein is Large ribosomal subunit protein uL22c (rpl22).